Reading from the N-terminus, the 213-residue chain is Peptide methionine sulfoxide reductase MsrA (213 aa).

The active site involves Cys53.

This sequence belongs to the MsrA Met sulfoxide reductase family.

The enzyme catalyses L-methionyl-[protein] + [thioredoxin]-disulfide + H2O = L-methionyl-(S)-S-oxide-[protein] + [thioredoxin]-dithiol. It carries out the reaction [thioredoxin]-disulfide + L-methionine + H2O = L-methionine (S)-S-oxide + [thioredoxin]-dithiol. Functionally, has an important function as a repair enzyme for proteins that have been inactivated by oxidation. Catalyzes the reversible oxidation-reduction of methionine sulfoxide in proteins to methionine. The polypeptide is Peptide methionine sulfoxide reductase MsrA (Serratia proteamaculans (strain 568)).